The sequence spans 156 residues: Glutaredoxin-2, mitochondrial (156 aa).

A mitochondrion-targeting transit peptide spans 1–19 (MSWRRAASVGRRLVASGRI). The region spanning 50-150 (VNQIQETISN…PLVHQCYLKK (101 aa)) is the Glutaredoxin domain. Position 61 (cysteine 61) interacts with [2Fe-2S] cluster. Position 67 (lysine 67) interacts with glutathione. Cysteine 70 carries the post-translational modification S-glutathionyl cysteine; alternate. A disulfide bridge links cysteine 70 with cysteine 73. Glutathione-binding residues include glutamine 102 and valine 114. Cysteine 146 lines the [2Fe-2S] cluster pocket.

Belongs to the glutaredoxin family. As to quaternary structure, monomer; active form. Homodimer; inactive form. The homodimer is probably linked by 1 2Fe-2S cluster. As to expression, widely expressed. Highly expressed in testis, and at much lower level in kidney and brain.

The protein localises to the mitochondrion. It localises to the nucleus. With respect to regulation, the 2Fe-2S present in the homodimer leads to inactivation of the enzyme. The 2Fe-2S may serve as a redox sensor: the presence of one-electron oxidants or reductants leading to the loss of the 2Fe-2S cluster, subsequent monomerization and activation of the enzyme. Its function is as follows. Glutathione-dependent oxidoreductase that facilitates the maintenance of mitochondrial redox homeostasis upon induction of apoptosis by oxidative stress. Involved in response to hydrogen peroxide and regulation of apoptosis caused by oxidative stress. Acts as a very efficient catalyst of monothiol reactions because of its high affinity for protein glutathione-mixed disulfides. Can receive electrons not only from glutathione (GSH), but also from thioredoxin reductase supporting both monothiol and dithiol reactions. Efficiently catalyzes both glutathionylation and deglutathionylation of mitochondrial complex I, which in turn regulates the superoxide production by the complex. Overexpression decreases the susceptibility to apoptosis and prevents loss of cardiolipin and cytochrome c release. This Mus musculus (Mouse) protein is Glutaredoxin-2, mitochondrial (Glrx2).